A 555-amino-acid polypeptide reads, in one-letter code: T-complex protein 1 subunit eta (555 aa).

The protein belongs to the TCP-1 chaperonin family. Heterooligomeric complex of about 850 to 900 kDa that forms two stacked rings, 12 to 16 nm in diameter.

It is found in the cytoplasm. Molecular chaperone; assists the folding of proteins upon ATP hydrolysis. Known to play a role, in vitro, in the folding of actin and tubulin. The protein is T-complex protein 1 subunit eta (cct7) of Dictyostelium discoideum (Social amoeba).